A 428-amino-acid polypeptide reads, in one-letter code: Histidinol dehydrogenase (428 aa).

Residues tyrosine 124, glutamine 186, and asparagine 209 each contribute to the NAD(+) site. Serine 233, glutamine 255, and histidine 258 together coordinate substrate. Zn(2+) is bound by residues glutamine 255 and histidine 258. Residues glutamate 322 and histidine 323 each act as proton acceptor in the active site. Residues histidine 323, aspartate 356, glutamate 410, and histidine 415 each coordinate substrate. Aspartate 356 contributes to the Zn(2+) binding site. Residue histidine 415 coordinates Zn(2+).

It belongs to the histidinol dehydrogenase family. Zn(2+) serves as cofactor.

It carries out the reaction L-histidinol + 2 NAD(+) + H2O = L-histidine + 2 NADH + 3 H(+). Its pathway is amino-acid biosynthesis; L-histidine biosynthesis; L-histidine from 5-phospho-alpha-D-ribose 1-diphosphate: step 9/9. Functionally, catalyzes the sequential NAD-dependent oxidations of L-histidinol to L-histidinaldehyde and then to L-histidine. This is Histidinol dehydrogenase from Bacteroides fragilis (strain YCH46).